Here is an 84-residue protein sequence, read N- to C-terminus: Small ribosomal subunit protein bS18 (84 aa).

Belongs to the bacterial ribosomal protein bS18 family. Part of the 30S ribosomal subunit. Forms a tight heterodimer with protein bS6.

Its function is as follows. Binds as a heterodimer with protein bS6 to the central domain of the 16S rRNA, where it helps stabilize the platform of the 30S subunit. This chain is Small ribosomal subunit protein bS18, found in Helicobacter hepaticus (strain ATCC 51449 / 3B1).